The following is a 201-amino-acid chain: Charged multivesicular body protein 6 (201 aa).

The N-myristoyl glycine moiety is linked to residue G2. Positions 10 to 145 (QSRVTEQDKA…YQRQIDELLA (136 aa)) form a coiled coil. S119 bears the Phosphoserine mark. A Phosphothreonine modification is found at T130. The short motif at 168-179 (IELPEVPSEPLP) is the Type-2 MIT-interacting motif element. A disordered region spans residues 171-201 (PEVPSEPLPEKIPEDVPVKARPRQAELVAAS). Over residues 178 to 188 (LPEKIPEDVPV) the composition is skewed to basic and acidic residues.

It belongs to the SNF7 family. Probable core component of the endosomal sorting required for transport complex III (ESCRT-III). ESCRT-III components are thought to multimerize to form a flat lattice on the perimeter membrane of the endosome. Several assembly forms of ESCRT-III may exist that interact and act sequentially. Interacts with VPS4A; the interaction is direct. Interacts with VPS4B; the interaction is direct. Interacts with CHMP4A, CHMP4B and CHMP4C. Interacts with SNF8, VPS25 and VPS36. ISGylated in a CHMP5-dependent manner. Isgylation weakens its interaction with VPS4A.

It localises to the endomembrane system. The protein resides in the endosome membrane. The protein localises to the late endosome membrane. Its subcellular location is the membrane. In terms of biological role, probable core component of the endosomal sorting required for transport complex III (ESCRT-III) which is involved in multivesicular bodies (MVBs) formation and sorting of endosomal cargo proteins into MVBs. MVBs contain intraluminal vesicles (ILVs) that are generated by invagination and scission from the limiting membrane of the endosome and mostly are delivered to lysosomes enabling degradation of membrane proteins, such as stimulated growth factor receptors, lysosomal enzymes and lipids. The MVB pathway appears to require the sequential function of ESCRT-O, -I,-II and -III complexes. ESCRT-III proteins mostly dissociate from the invaginating membrane before the ILV is released. The ESCRT machinery also functions in topologically equivalent membrane fission events, such as the terminal stages of cytokinesis and the budding of enveloped viruses (lentiviruses). ESCRT-III proteins are believed to mediate the necessary vesicle extrusion and/or membrane fission activities, possibly in conjunction with the AAA ATPase VPS4. In the ESCRT-III complex, it probably serves as an acceptor for the ESCRT-II complex on endosomal membrane. The chain is Charged multivesicular body protein 6 (CHMP6) from Pongo abelii (Sumatran orangutan).